The chain runs to 462 residues: Probable Xaa-Pro aminopeptidase pepP (462 aa).

4 residues coordinate Mn(2+): Asp259, Asp270, Glu393, and Glu433.

The protein belongs to the peptidase M24B family. Mn(2+) is required as a cofactor.

The enzyme catalyses Release of any N-terminal amino acid, including proline, that is linked to proline, even from a dipeptide or tripeptide.. Its function is as follows. Catalyzes the removal of a penultimate prolyl residue from the N-termini of peptides. In Metarhizium robertsii (strain ARSEF 23 / ATCC MYA-3075) (Metarhizium anisopliae (strain ARSEF 23)), this protein is Probable Xaa-Pro aminopeptidase pepP (pepP).